We begin with the raw amino-acid sequence, 411 residues long: Probable G-protein coupled receptor AH9.1 (411 aa).

The Cytoplasmic segment spans residues 1–18 (MLLFLLRRIFDCRYKYKL). Residues 19–39 (FVKALVLFLTIVYNAGLVHFF) form a helical membrane-spanning segment. The Extracellular segment spans residues 40 to 55 (FRTTSLDDSPEMNHVD). The chain crosses the membrane as a helical span at residues 56-76 (YVAHVIVMPIVLSIGMINQCL). Residues 77-87 (NVCTLLHIRTS) are Cytoplasmic-facing. Residues 88–108 (IFLYLKASAIADILSIVAFIP) form a helical membrane-spanning segment. Topologically, residues 109 to 131 (FLFRHAKLIDPSWELGMFYHAHL) are extracellular. A helical membrane pass occupies residues 132-152 (ELPLINALISASALNIVAMTV). Residues 153 to 176 (DRYVSVCHPIKFFQNNETKPSRRR) are Cytoplasmic-facing. A helical membrane pass occupies residues 177–197 (TMLIIVMIYFIALMIYFPSVF). Over 198-229 (QKKLGVVTDALTNKTIYTIVRNEDVEALQVFK) the chain is Extracellular. Asn-210 carries an N-linked (GlcNAc...) asparagine glycan. Residues 230-250 (FYLIVRECICRWGPVLLLVIL) form a helical membrane-spanning segment. Residues 251 to 299 (NMCVVRGLRKIDKRNWFWRQPSQNSRTETLAQRQLRSPRDDRSRISVLL) lie on the Cytoplasmic side of the membrane. The chain crosses the membrane as a helical span at residues 300-320 (FVTSATFIICNIPASVISFFV). Over 321 to 333 (RRVSGSLFWQIFR) the chain is Extracellular. A helical transmembrane segment spans residues 334 to 354 (AIANLLQVTSYLYNFYLYALC). Topologically, residues 355–411 (SSEYRHAFLRLFGCRSSLSPTSTGDSPTVRVSVHGKRCHQAVVLLGNENHENPVDEV) are cytoplasmic.

It belongs to the G-protein coupled receptor 1 family.

Its subcellular location is the cell membrane. Its function is as follows. Not known. Putative receptor. This chain is Probable G-protein coupled receptor AH9.1, found in Caenorhabditis elegans.